A 313-amino-acid chain; its full sequence is Small glutamine-rich tetratricopeptide repeat-containing protein alpha (313 aa).

The segment at 66 to 100 (ATGKEMPQDLRSPARTPPSEEDSAEAERLKTEGNE) is disordered. Ser-77 is modified (phosphoserine). Position 81 is a phosphothreonine (Thr-81). A Phosphoserine modification is found at Ser-84. Positions 90-100 (EAERLKTEGNE) are enriched in basic and acidic residues. 3 TPR repeats span residues 91–124 (AERL…NPAN), 125–158 (AVYF…DPAY), and 159–192 (SKAY…DPDN). Lys-137 bears the N6-acetyllysine mark. Residues 250–269 (MISGGNNPLGTPGTSPSQND) form a disordered region. Ser-301 is modified (phosphoserine). Thr-303 carries the phosphothreonine modification. Phosphoserine is present on Ser-305.

It belongs to the SGT family. In terms of assembly, homodimer. Homooligomer. Interacts with DNAJC5 and DNAJC5B. Interacts (via TPR repeats) with HSP90AA1. Interacts (via Gln-rich region) with SLC2A1. Interacts with HSP90AB1. Interacts (via TPR repeats) with HSPA8/Hsc70; the interaction is direct. Interacts with BAG6 (via ubiquitin-like domain); interaction prevents interaction between BAG6 and RNF126. Forms a multiprotein complex, at least composed of DNAJB12, DNAJB14, HSPA8/Hsc70 and SGTA; interaction with DNAJB14 and HSPA8/Hsc70 is direct. As to quaternary structure, (Microbial infection) Interacts with Vpu and Gag from HIV-1. (Microbial infection) Interacts with SARS-CoV accessory protein 7a. As to expression, ubiquitous.

The protein localises to the cytoplasm. The protein resides in the nucleus. In terms of biological role, co-chaperone that binds misfolded and hydrophobic patches-containing client proteins in the cytosol. Mediates their targeting to the endoplasmic reticulum but also regulates their sorting to the proteasome when targeting fails. Functions in tail-anchored/type II transmembrane proteins membrane insertion constituting with ASNA1 and the BAG6 complex a targeting module. Functions upstream of the BAG6 complex and ASNA1, binding more rapidly the transmembrane domain of newly synthesized proteins. It is also involved in the regulation of the endoplasmic reticulum-associated misfolded protein catabolic process via its interaction with BAG6: collaborates with the BAG6 complex to maintain hydrophobic substrates in non-ubiquitinated states. Competes with RNF126 for interaction with BAG6, preventing the ubiquitination of client proteins associated with the BAG6 complex. Binds directly to HSC70 and HSP70 and regulates their ATPase activity. (Microbial infection) In case of infection by polyomavirus, involved in the virus endoplasmic reticulum membrane penetration and infection via interaction with DNAJB12, DNAJB14 and HSPA8/Hsc70. The protein is Small glutamine-rich tetratricopeptide repeat-containing protein alpha (SGTA) of Homo sapiens (Human).